A 257-amino-acid chain; its full sequence is NAD-capped RNA hydrolase NudC (257 aa).

Residue arginine 69 coordinates substrate. Zn(2+) is bound by residues cysteine 98 and cysteine 101. Glutamate 111 lines the substrate pocket. Residues cysteine 116 and cysteine 119 each coordinate Zn(2+). Tyrosine 124 lines the substrate pocket. In terms of domain architecture, Nudix hydrolase spans 125–248 (PQIAPCIIVA…TVARRLIEDT (124 aa)). Positions 158, 174, and 178 each coordinate a divalent metal cation. Residues 159-180 (GFVEVGETLEQAVAREVMEESG) carry the Nudix box motif. 192 to 199 (QPWPFPQS) contributes to the substrate binding site. Glutamate 219 is an a divalent metal cation binding site. Alanine 241 contacts substrate.

Belongs to the Nudix hydrolase family. NudC subfamily. Homodimer. Mg(2+) is required as a cofactor. Requires Mn(2+) as cofactor. The cofactor is Zn(2+).

The catalysed reaction is a 5'-end NAD(+)-phospho-ribonucleoside in mRNA + H2O = a 5'-end phospho-adenosine-phospho-ribonucleoside in mRNA + beta-nicotinamide D-ribonucleotide + 2 H(+). It catalyses the reaction NAD(+) + H2O = beta-nicotinamide D-ribonucleotide + AMP + 2 H(+). It carries out the reaction NADH + H2O = reduced beta-nicotinamide D-ribonucleotide + AMP + 2 H(+). Its function is as follows. mRNA decapping enzyme that specifically removes the nicotinamide adenine dinucleotide (NAD) cap from a subset of mRNAs by hydrolyzing the diphosphate linkage to produce nicotinamide mononucleotide (NMN) and 5' monophosphate mRNA. The NAD-cap is present at the 5'-end of some mRNAs and stabilizes RNA against 5'-processing. Has preference for mRNAs with a 5'-end purine. Catalyzes the hydrolysis of a broad range of dinucleotide pyrophosphates. The chain is NAD-capped RNA hydrolase NudC from Salmonella heidelberg (strain SL476).